Reading from the N-terminus, the 340-residue chain is UPF0324 membrane protein BC_5174 (340 aa).

10 consecutive transmembrane segments (helical) span residues 13–35, 40–59, 99–118, 128–150, 157–179, 189–211, 218–240, 255–277, 279–301, and 316–338; these read FGFS…LAEL, IMGQ…AAIG, VLVI…YGLT, GILT…APQV, TAVG…TLLY, YGVF…APGG, AVIV…GLWF, LPIP…GIIP, VVAG…GLGL, and FVAG…YALG.

This sequence belongs to the UPF0324 family.

It is found in the cell membrane. This Bacillus cereus (strain ATCC 14579 / DSM 31 / CCUG 7414 / JCM 2152 / NBRC 15305 / NCIMB 9373 / NCTC 2599 / NRRL B-3711) protein is UPF0324 membrane protein BC_5174.